The chain runs to 480 residues: Adenosylhomocysteinase (480 aa).

Residues Thr63, Asp142, and Glu203 each coordinate substrate. Residue Thr204–Thr206 participates in NAD(+) binding. Positions 233 and 237 each coordinate substrate. Residues Asn238, Gly267–Gly272, Glu290, Asn325, Ile346–His348, and Asn394 contribute to the NAD(+) site.

This sequence belongs to the adenosylhomocysteinase family. NAD(+) is required as a cofactor.

Its subcellular location is the cytoplasm. It carries out the reaction S-adenosyl-L-homocysteine + H2O = L-homocysteine + adenosine. It functions in the pathway amino-acid biosynthesis; L-homocysteine biosynthesis; L-homocysteine from S-adenosyl-L-homocysteine: step 1/1. In terms of biological role, may play a key role in the regulation of the intracellular concentration of adenosylhomocysteine. This is Adenosylhomocysteinase from Xanthomonas campestris pv. campestris (strain 8004).